The chain runs to 1575 residues: Ras GTPase-activating-like protein IQGAP2 (1575 aa).

The residue at position 16 (serine 16) is a Phosphoserine. Positions 41–156 (LCHLEEAKRW…YCIHALSLYL (116 aa)) constitute a Calponin-homology (CH) domain. Threonine 356 carries the post-translational modification Phosphothreonine. One can recognise a WW domain in the interval 594 to 627 (ESSEGSWVTLNVQEKYNYYYNTDSKEGSWVPPEL). Serine 595 and serine 599 each carry phosphoserine. IQ domains lie at 690-719 (QTESVVKIQAFWKGFKQRQEYLHRQQVFAG), 720-749 (NVDSVVKIQSWFRMVTARKSYLSRLRYFED), and 750-779 (HKNEIVKIQSLLRASKARDDYKALVGSENP). Threonine 782, threonine 881, threonine 1002, and threonine 1269 each carry phosphothreonine. The 250-residue stretch at 933–1182 (YLLLKLFKTA…QEFRKYFQEA (250 aa)) folds into the Ras-GAP domain. A phosphoserine mark is found at serine 1279 and serine 1461.

Binds to activated CDC42 and RAC1 but does not seem to stimulate their GTPase activity. Associates with calmodulin. This chain is Ras GTPase-activating-like protein IQGAP2 (Iqgap2), found in Mus musculus (Mouse).